Reading from the N-terminus, the 183-residue chain is Protein jagunal homolog 1-B (183 aa).

The Cytoplasmic segment spans residues 1–39 (MASRAGPRATGTDGSDYQHRERVASHYQMSVALKSEIKK). The chain crosses the membrane as a helical span at residues 40–60 (LNIAHAVVWFLVAAQVLVSQL). Residues 61-71 (NLVSHKVVASP) lie on the Lumenal side of the membrane. A helical transmembrane segment spans residues 72-92 (YQWEYTYLLSIIPTVFSFMAL). Residues 93 to 99 (PKNNISY) lie on the Cytoplasmic side of the membrane. A helical transmembrane segment spans residues 100–120 (LVISMISGGLFCIGPILYGGM). At 121-137 (EMFPVAQQLYRHGKAYR) the chain is on the lumenal side. The chain crosses the membrane as a helical span at residues 138–158 (FIFGFSAVSIMYLVLIISVQV). Over 159-183 (HGWQIYYSKKLLDAWFTNTQDKKKK) the chain is Cytoplasmic.

Belongs to the jagunal family.

The protein resides in the endoplasmic reticulum membrane. Its function is as follows. Endoplasmic reticulum transmembrane protein involved in vesicle-mediated transport, which is required for neutrophil function. In Danio rerio (Zebrafish), this protein is Protein jagunal homolog 1-B (jagn1b).